A 907-amino-acid polypeptide reads, in one-letter code: Leucine-rich repeat-containing G-protein coupled receptor 5 (907 aa).

The N-terminal stretch at 1 to 21 (MDTSRVRMLLSLLALLQLVAA) is a signal peptide. Topologically, residues 22–561 (GSPPRPDTMP…EHLFGSWLIR (540 aa)) are extracellular. The LRRNT domain occupies 33–64 (GCPSYCHCELDGRMLLRVDCSDLGLSELPSNL). Intrachain disulfides connect Cys-34/Cys-40 and Cys-38/Cys-52. 17 LRR repeats span residues 44-64 (GRML…PSNL), 65-88 (SVFT…LLHR), 89-112 (LRFL…AFAG), 114-136 (HSLK…ALQN), 137-160 (LRSL…CFSG), 162-184 (HSLR…AFRS), 186-208 (SALQ…AFGN), 209-232 (LSSL…CFDG), 233-256 (LHSL…IKTL), 257-279 (SNLK…AFVG), 281-303 (PSLI…AFQH), 304-327 (LPEL…LTGT), 328-350 (ATLE…VCDQ), 351-375 (LPNL…GCQK), 377-396 (QKID…TFQQ), 397-420 (LFNL…AFST), and 422-444 (PSLI…GLHG). Residues Asn-63 and Asn-77 are each glycosylated (N-linked (GlcNAc...) asparagine). Asn-208 carries an N-linked (GlcNAc...) asparagine glycan. A disulfide bridge connects residues Cys-348 and Cys-373. A disulfide bridge connects residues Cys-479 and Cys-541. Residues 562–582 (IGVWTTAVLALSCNALVAFTV) traverse the membrane as a helical segment. One copy of the LRR 18 repeat lies at 564 to 585 (VWTTAVLALSCNALVAFTVFRT). The Cytoplasmic segment spans residues 583–595 (FRTPLYISSIKLL). Residues 596–616 (IGVIAVVDILMGVSSAILAVV) traverse the membrane as a helical segment. Over 617–638 (DTFTFGSFAQHGAWWEGGIGCQ) the chain is Extracellular. Residues Cys-637 and Cys-712 are joined by a disulfide bond. The helical transmembrane segment at 639-659 (IVGFLSIFASESSVFLLTLAA) threads the bilayer. Topologically, residues 660 to 682 (LERGFSVKCSSKFEMKAPLSSLK) are cytoplasmic. A helical transmembrane segment spans residues 683–703 (AIILLCVLLALTIATVPLLGG). At 704–723 (SEYNASPLCLPLPFGEPSTT) the chain is on the extracellular side. A helical membrane pass occupies residues 724 to 744 (GYMVALVLLNSLCFLIMTIAY). Topologically, residues 745 to 775 (TRLYCSLEKGELENLWDCSMVKHTALLLFTN) are cytoplasmic. Residues 776–796 (CILYCPVAFLSFSSLLNLTFI) form a helical membrane-spanning segment. Over 797–802 (SPEVIK) the chain is Extracellular. Residues 803-823 (FILLVIVPLPACLNPLLYIVF) traverse the membrane as a helical segment. Residues 824 to 907 (NPHFKEDMGS…LSSVAFVPCL (84 aa)) are Cytoplasmic-facing.

It belongs to the G-protein coupled receptor 1 family. As to quaternary structure, identified in a complex composed of RNF43, LGR5 and RSPO1. Also interacts with other R-spondin ligands, including RSPO2, RSPO3 and RSPO4.

The protein localises to the cell membrane. It is found in the golgi apparatus. Its subcellular location is the trans-Golgi network membrane. Receptor for R-spondins that potentiates the canonical Wnt signaling pathway and acts as a stem cell marker of the intestinal epithelium and the hair follicle. Upon binding to R-spondins (RSPO1, RSPO2, RSPO3 or RSPO4), associates with phosphorylated LRP6 and frizzled receptors that are activated by extracellular Wnt receptors, triggering the canonical Wnt signaling pathway to increase expression of target genes. In contrast to classical G-protein coupled receptors, does not activate heterotrimeric G-proteins to transduce the signal. Involved in the development and/or maintenance of the adult intestinal stem cells during postembryonic development. In Rattus norvegicus (Rat), this protein is Leucine-rich repeat-containing G-protein coupled receptor 5 (Lgr5).